Reading from the N-terminus, the 261-residue chain is Lipase LipV (261 aa).

Serine 87 serves as the catalytic Nucleophile. Catalysis depends on charge relay system residues aspartate 217 and histidine 240.

Belongs to the AB hydrolase superfamily.

The catalysed reaction is a carboxylic ester + H2O = an alcohol + a carboxylate + H(+). It carries out the reaction a tetradecanoate ester + H2O = an aliphatic alcohol + tetradecanoate + H(+). The enzyme catalyses decanoate ester + H2O = decanoate + an aliphatic alcohol + H(+). It catalyses the reaction an octanoate ester + H2O = an aliphatic alcohol + octanoate + H(+). The catalysed reaction is a dodecanoate ester + H2O = an aliphatic alcohol + dodecanoate + H(+). It carries out the reaction a butanoate ester + H2O = an aliphatic alcohol + butanoate + H(+). The enzyme catalyses hexadecanoate ester + H2O = an aliphatic alcohol + hexadecanoate + H(+). It catalyses the reaction octadecanoate ester + H2O = an aliphatic alcohol + octadecanoate + H(+). With respect to regulation, is inhibited by tetrahydrolipstatin, a specific lipase inhibitor and RHC 80267, a diacylglycerol lipase inhibitor, but not by phenylglyoxal and iodoacetate. Lipase that displays broad substrate specificity and preferentially hydrolyzes p-nitrophenyl myristate in vitro. Also shows significant activity with pNP-butyrate (68%), pNP-octanoate (82%), pNP-decanoate (90%), and pNP-laurate (74%). Is probably involved in lipid catabolism. Is active at low pH, and might play some important role in mycobacterial biology in macrophages where the bacteria encounters acidic stress. This chain is Lipase LipV, found in Mycobacterium tuberculosis (strain ATCC 25618 / H37Rv).